A 580-amino-acid chain; its full sequence is NADH-quinone oxidoreductase subunit C/D (580 aa).

The segment at 1–171 (MSLDQAIPEA…PPFVLTDRLF (171 aa)) is NADH dehydrogenase I subunit C. Positions 195–580 (ELMVLNFGPH…IDFVMSDVDR (386 aa)) are NADH dehydrogenase I subunit D.

This sequence in the N-terminal section; belongs to the complex I 30 kDa subunit family. The protein in the C-terminal section; belongs to the complex I 49 kDa subunit family. NDH-1 is composed of 13 different subunits. Subunits NuoB, CD, E, F, and G constitute the peripheral sector of the complex.

It localises to the cell inner membrane. It carries out the reaction a quinone + NADH + 5 H(+)(in) = a quinol + NAD(+) + 4 H(+)(out). Its function is as follows. NDH-1 shuttles electrons from NADH, via FMN and iron-sulfur (Fe-S) centers, to quinones in the respiratory chain. The immediate electron acceptor for the enzyme in this species is believed to be ubiquinone. Couples the redox reaction to proton translocation (for every two electrons transferred, four hydrogen ions are translocated across the cytoplasmic membrane), and thus conserves the redox energy in a proton gradient. The protein is NADH-quinone oxidoreductase subunit C/D of Cereibacter sphaeroides (strain KD131 / KCTC 12085) (Rhodobacter sphaeroides).